The sequence spans 425 residues: UPF0597 protein VF_0641 (425 aa).

It belongs to the UPF0597 family.

The sequence is that of UPF0597 protein VF_0641 from Aliivibrio fischeri (strain ATCC 700601 / ES114) (Vibrio fischeri).